We begin with the raw amino-acid sequence, 428 residues long: 3-phosphoshikimate 1-carboxyvinyltransferase (428 aa).

3-phosphoshikimate contacts are provided by K22, S23, and R27. K22 is a binding site for phosphoenolpyruvate. Phosphoenolpyruvate contacts are provided by G96 and R124. Residues S169, S170, Q171, S197, D313, N336, and K340 each contribute to the 3-phosphoshikimate site. Residue Q171 coordinates phosphoenolpyruvate. The active-site Proton acceptor is the D313. Residues R344, R386, and K411 each contribute to the phosphoenolpyruvate site.

It belongs to the EPSP synthase family. Monomer.

The protein resides in the cytoplasm. The catalysed reaction is 3-phosphoshikimate + phosphoenolpyruvate = 5-O-(1-carboxyvinyl)-3-phosphoshikimate + phosphate. It functions in the pathway metabolic intermediate biosynthesis; chorismate biosynthesis; chorismate from D-erythrose 4-phosphate and phosphoenolpyruvate: step 6/7. In terms of biological role, catalyzes the transfer of the enolpyruvyl moiety of phosphoenolpyruvate (PEP) to the 5-hydroxyl of shikimate-3-phosphate (S3P) to produce enolpyruvyl shikimate-3-phosphate and inorganic phosphate. The protein is 3-phosphoshikimate 1-carboxyvinyltransferase of Xenorhabdus nematophila (strain ATCC 19061 / DSM 3370 / CCUG 14189 / LMG 1036 / NCIMB 9965 / AN6).